We begin with the raw amino-acid sequence, 184 residues long: Serine recombinase PinE (184 aa).

Positions 1 to 134 (MLIGYVRVST…AGLETARAQG (134 aa)) constitute a Resolvase/invertase-type recombinase catalytic domain. The active-site O-(5'-phospho-DNA)-serine intermediate is Ser-9. Positions 161-180 (RQKVAIIYDVGVSTLYKRFP) form a DNA-binding region, H-T-H motif.

Belongs to the site-specific recombinase resolvase family.

This protein catalyzes the inversion of an 1800-bp E.coli DNA fragment, the P region, which can exist in either orientation. The function of the inversion is not yet clear. This chain is Serine recombinase PinE (pinE), found in Escherichia coli (strain K12).